The sequence spans 736 residues: Gephyrin (736 aa).

The tract at residues 14–166 (QIRVGVLTVS…FILPALPHAI (153 aa)) is MPT Mo-transferase. Residues 140 to 316 (LIINLPGSKK…VDITKVARRH (177 aa)) form an interaction with GABARAP region. 2 disordered regions span residues 181–232 (DELE…DSSS) and 260–290 (TASLSTTPSESPRAQATSRLSTASCPTPKVQ). The span at 187–199 (PSPPPPLSPPPTT) shows a compositional bias: pro residues. Residues Ser-188 and Ser-194 each carry the phosphoserine modification. A Phosphothreonine modification is found at Thr-198. Ser-200 bears the Phosphoserine mark. The S-palmitoyl cysteine moiety is linked to residue Cys-212. A compositionally biased stretch (polar residues) spans 261-290 (ASLSTTPSESPRAQATSRLSTASCPTPKVQ). A Phosphoserine modification is found at Ser-262. 2 positions are modified to phosphothreonine: Thr-265 and Thr-266. Ser-268 and Ser-270 each carry phosphoserine. Cys-284 carries the S-palmitoyl cysteine lipid modification. Ser-305 bears the Phosphoserine mark. Residues 326–736 (MDKAFITVLE…VVDVMVIGRL (411 aa)) form an MPT adenylyltransferase region.

The protein in the N-terminal section; belongs to the MoaB/Mog family. In the C-terminal section; belongs to the MoeA family. In terms of assembly, homotrimer, homodimer and homooligomer. Interacts with GABARAP. Interacts with SRGAP2 (via SH3 domain). Interacts with GABRA3. Interacts with GLRB. GABRA3 and GLRB occupy overlapping binding sites. Interacts with ARHGAP32; IQSEC3, INSYN1 and INSYN2A. Mg(2+) is required as a cofactor. Post-translationally, palmitoylated. Palmitoylation is stimulated by GABA type A receptors activity. Palmitoylation by ZDHHC12 regulates clustering at synapses.

It is found in the postsynaptic cell membrane. Its subcellular location is the cell membrane. The protein localises to the cytoplasm. The protein resides in the cytosol. It localises to the cytoskeleton. It is found in the cell projection. Its subcellular location is the dendrite. The protein localises to the postsynaptic density. The catalysed reaction is molybdopterin + ATP + H(+) = adenylyl-molybdopterin + diphosphate. The enzyme catalyses adenylyl-molybdopterin + molybdate = Mo-molybdopterin + AMP + H(+). Its pathway is cofactor biosynthesis; molybdopterin biosynthesis. With respect to regulation, inhibited by copper and tungsten. Its function is as follows. Microtubule-associated protein involved in membrane protein-cytoskeleton interactions. It is thought to anchor the inhibitory glycine receptor (GLYR) to subsynaptic microtubules. Acts as a major instructive molecule at inhibitory synapses, where it also clusters GABA type A receptors. Functionally, also has a catalytic activity and catalyzes two steps in the biosynthesis of the molybdenum cofactor. In the first step, molybdopterin is adenylated. Subsequently, molybdate is inserted into adenylated molybdopterin and AMP is released. This Homo sapiens (Human) protein is Gephyrin.